The sequence spans 33 residues: MSDIN-like toxin proprotein 1 (33 aa).

A propeptide spanning residues Met1–Pro10 is cleaved from the precursor. The segment at residues Ile11–Pro18 is a cross-link (cyclopeptide (Ile-Pro)). A propeptide spanning residues Cys19–Arg33 is cleaved from the precursor.

It belongs to the MSDIN fungal toxin family. In terms of processing, processed by the macrocyclase-peptidase enzyme POPB to yield a toxic cyclic octapeptide. POPB first removes 10 residues from the N-terminus. Conformational trapping of the remaining peptide forces the enzyme to release this intermediate rather than proceed to macrocyclization. The enzyme rebinds the remaining peptide in a different conformation and catalyzes macrocyclization of the N-terminal 8 residues.

In terms of biological role, probable toxin that belongs to the MSDIN-like toxin family responsible for a large number of food poisoning cases and deaths. This is MSDIN-like toxin proprotein 1 from Amanita fuliginea (East Asian brown death cap).